Consider the following 267-residue polypeptide: Malonyl-[acyl-carrier protein] O-methyltransferase (267 aa).

This sequence belongs to the methyltransferase superfamily.

The enzyme catalyses malonyl-[ACP] + S-adenosyl-L-methionine = malonyl-[ACP] methyl ester + S-adenosyl-L-homocysteine. It functions in the pathway cofactor biosynthesis; biotin biosynthesis. Functionally, converts the free carboxyl group of a malonyl-thioester to its methyl ester by transfer of a methyl group from S-adenosyl-L-methionine (SAM). It allows to synthesize pimeloyl-ACP via the fatty acid synthetic pathway. The polypeptide is Malonyl-[acyl-carrier protein] O-methyltransferase (Yersinia pestis).